We begin with the raw amino-acid sequence, 88 residues long: Beta-insect excitatory toxin LqhIT1b (88 aa).

Positions 1-18 (MKFFLLFLVVLPIMGVLG) are cleaved as a signal peptide. Residues 20 to 83 (KNGYAVDSKG…ISDTTKKYCD (64 aa)) form the LCN-type CS-alpha/beta domain. 4 cysteine pairs are disulfide-bonded: Cys-34–Cys-55, Cys-40–Cys-60, Cys-44–Cys-62, and Cys-56–Cys-82.

This sequence belongs to the long (4 C-C) scorpion toxin superfamily. Sodium channel inhibitor family. Beta subfamily. As to expression, expressed by the venom gland.

Its subcellular location is the secreted. Functionally, excitatory insect toxins induce a spastic paralysis. They bind voltage-independently at site-4 of sodium channels (Nav) and shift the voltage of activation toward more negative potentials thereby affecting sodium channel activation and promoting spontaneous and repetitive firing. This chain is Beta-insect excitatory toxin LqhIT1b, found in Leiurus hebraeus (Hebrew deathstalker scorpion).